The chain runs to 257 residues: ATP synthase delta chain, chloroplastic (257 aa).

The transit peptide at 1-70 (MAALQNPVAL…PRGGALGTRM (70 aa)) directs the protein to the chloroplast.

This sequence belongs to the ATPase delta chain family. F-type ATPases have 2 components, CF(1) - the catalytic core - and CF(0) - the membrane proton channel. CF(1) has five subunits: alpha(3), beta(3), gamma(1), delta(1), epsilon(1). CF(0) has three main subunits: a, b and c.

The protein localises to the plastid. It is found in the chloroplast thylakoid membrane. In terms of biological role, this protein seems to be part of the stalk that links CF(0) to CF(1). It either transmits conformational changes from CF(0) into CF(1) or is implicated in proton conduction. The chain is ATP synthase delta chain, chloroplastic (ATPD) from Spinacia oleracea (Spinach).